The chain runs to 371 residues: Putative glutamate--cysteine ligase 2 (371 aa).

Belongs to the glutamate--cysteine ligase type 2 family. YbdK subfamily.

The catalysed reaction is L-cysteine + L-glutamate + ATP = gamma-L-glutamyl-L-cysteine + ADP + phosphate + H(+). Its function is as follows. ATP-dependent carboxylate-amine ligase which exhibits weak glutamate--cysteine ligase activity. The protein is Putative glutamate--cysteine ligase 2 of Burkholderia multivorans (strain ATCC 17616 / 249).